A 240-amino-acid polypeptide reads, in one-letter code: Enoyl-CoA delta isomerase 1, peroxisomal (240 aa).

Residues 238-240 (SKL) carry the Microbody targeting signal motif.

This sequence belongs to the enoyl-CoA hydratase/isomerase family.

Its subcellular location is the peroxisome. The enzyme catalyses a (3Z)-enoyl-CoA = a 4-saturated (2E)-enoyl-CoA. It catalyses the reaction a (3E)-enoyl-CoA = a 4-saturated (2E)-enoyl-CoA. The protein operates within lipid metabolism; fatty acid beta-oxidation. In terms of biological role, able to isomerize both 3-cis and 3-trans double bonds into the 2-trans form in a range of enoyl-CoA species. Essential for the beta oxidation of unsaturated fatty acids. In Arabidopsis thaliana (Mouse-ear cress), this protein is Enoyl-CoA delta isomerase 1, peroxisomal.